The following is a 713-amino-acid chain: Cadherin-13 (713 aa).

The first 22 residues, Met1 to Ala22, serve as a signal peptide directing secretion. A propeptide spanning residues Glu23–Arg138 is cleaved from the precursor. N-linked (GlcNAc...) asparagine glycans are attached at residues Asn52 and Asn86. 5 Cadherin domains span residues Ser139–Phe245, Arg246–Phe363, Thr364–Phe477, Tyr478–Ile585, and Phe584–Asn690. 7 N-linked (GlcNAc...) asparagine glycosylation sites follow: Asn382, Asn489, Asn500, Asn530, Asn598, Asn638, and Asn671. Residue Asn690 is the site of GPI-anchor amidated asparagine attachment. The propeptide at Ala691 to Leu713 is removed in mature form.

In terms of assembly, by contrast to classical cadherins, homodimerization in trans is not mediated by cadherin EC1 domain strand-swapping, but instead through a homophilic adhesive interface which joins two elongated EC1-EC2 domains through a region near their Ca2+-binding sites to form a tetrahedral, X-like shape.

It is found in the cell membrane. It localises to the cytoplasm. Functionally, cadherins are calcium-dependent cell adhesion proteins. They preferentially interact with themselves in a homophilic manner in connecting cells; cadherins may thus contribute to the sorting of heterogeneous cell types. May act as a negative regulator of neural cell growth. The polypeptide is Cadherin-13 (CDH13) (Pongo abelii (Sumatran orangutan)).